Reading from the N-terminus, the 275-residue chain is 3-deoxy-manno-octulosonate cytidylyltransferase (275 aa).

It belongs to the KdsB family.

Its subcellular location is the cytoplasm. It catalyses the reaction 3-deoxy-alpha-D-manno-oct-2-ulosonate + CTP = CMP-3-deoxy-beta-D-manno-octulosonate + diphosphate. Its pathway is nucleotide-sugar biosynthesis; CMP-3-deoxy-D-manno-octulosonate biosynthesis; CMP-3-deoxy-D-manno-octulosonate from 3-deoxy-D-manno-octulosonate and CTP: step 1/1. It functions in the pathway bacterial outer membrane biogenesis; lipopolysaccharide biosynthesis. In terms of biological role, activates KDO (a required 8-carbon sugar) for incorporation into bacterial lipopolysaccharide in Gram-negative bacteria. This chain is 3-deoxy-manno-octulosonate cytidylyltransferase, found in Psychrobacter sp. (strain PRwf-1).